Consider the following 377-residue polypeptide: Mannan endo-1,4-beta-mannosidase A (377 aa).

Residues 1-18 form the signal peptide; that stretch reads MKLSHMLLSLASLGVATA. W84 contacts substrate. Residue N105 is glycosylated (N-linked (GlcNAc...) asparagine). Residue N197 coordinates substrate. E198 functions as the Proton donor in the catalytic mechanism. N255 carries an N-linked (GlcNAc...) asparagine glycan. Y273 contacts substrate. Residue E306 is the Nucleophile of the active site. N326 carries N-linked (GlcNAc...) asparagine glycosylation. W336 is a substrate binding site. N357 carries N-linked (GlcNAc...) asparagine glycosylation.

Belongs to the glycosyl hydrolase 5 (cellulase A) family.

It is found in the secreted. The enzyme catalyses Random hydrolysis of (1-&gt;4)-beta-D-mannosidic linkages in mannans, galactomannans and glucomannans.. Functionally, endo-1,4-mannanase, a crucial enzyme for depolymerization of seed galactomannans and wood galactoglucomannans. The sequence is that of Mannan endo-1,4-beta-mannosidase A (manA) from Aspergillus aculeatus.